The following is a 224-amino-acid chain: uncharacterized protein (224 aa).

This is an uncharacterized protein from Saccharomyces cerevisiae (strain ATCC 204508 / S288c) (Baker's yeast).